Consider the following 278-residue polypeptide: uncharacterized protein (278 aa).

Residues 1 to 32 (MSSASFTTKALSVLAALTAASAPLVAASPAHA) form the signal peptide. A Peptidase S1 domain is found at 33-236 (LANARNVTGS…HAEWIAYYTG (204 aa)). A disulfide bond links Cys-59 and Cys-75. Active-site charge relay system residues include His-74, Asp-123, and Ser-189.

This sequence belongs to the peptidase S1 family.

Its subcellular location is the secreted. This is an uncharacterized protein from Corynebacterium glutamicum (strain R).